The sequence spans 21 residues: Kassinatuerin-1 (21 aa).

Ile-21 bears the Isoleucine amide mark.

As to expression, expressed by the skin dorsal glands.

The protein localises to the secreted. Functionally, shows broad-spectrum antimicrobial activity against the Gram-negative bacterium E.coli (MIC=6.25 uM), K.pneumoniae (MIC=25 uM), E.cloacae (MIC=6.25 uM), P.aeruginosa (MIC=25 uM), the Gram-positive bacterium S.aureus (MIC=6.25 uM), S.epidermidis (MIC=6.25 uM), E.faecalis (MIC=12.5 uM), and the fungus C.albicans (MIC=100 uM). Has no antimicrobial effect against P.mirabilis (MIC&gt;100 uM). Has relatively high cytolytic and hemolytic activities. Its alpha-helix has considerable amphipathic character. The sequence is that of Kassinatuerin-1 from Kassina senegalensis (Senegal running frog).